The sequence spans 60 residues: Large ribosomal subunit protein uL30 (60 aa).

Belongs to the universal ribosomal protein uL30 family. Part of the 50S ribosomal subunit.

The protein is Large ribosomal subunit protein uL30 of Clavibacter michiganensis subsp. michiganensis (strain NCPPB 382).